The sequence spans 822 residues: Endonuclease MutS2 (822 aa).

An ATP-binding site is contributed by 348-355 (GPNTGGKT). The tract at residues 707-737 (SLNGKKVEPPPKSEPVPKKVKAEPPATEAKS) is disordered. The span at 709 to 728 (NGKKVEPPPKSEPVPKKVKA) shows a compositional bias: basic and acidic residues. The Smr domain occupies 749–822 (LDCRGDRLER…GAGVTIAYLR (74 aa)).

The protein belongs to the DNA mismatch repair MutS family. MutS2 subfamily. Homodimer. Binds to stalled ribosomes, contacting rRNA.

Functionally, endonuclease that is involved in the suppression of homologous recombination and thus may have a key role in the control of bacterial genetic diversity. In terms of biological role, acts as a ribosome collision sensor, splitting the ribosome into its 2 subunits. Detects stalled/collided 70S ribosomes which it binds and splits by an ATP-hydrolysis driven conformational change. Acts upstream of the ribosome quality control system (RQC), a ribosome-associated complex that mediates the extraction of incompletely synthesized nascent chains from stalled ribosomes and their subsequent degradation. Probably generates substrates for RQC. The protein is Endonuclease MutS2 of Synechocystis sp. (strain ATCC 27184 / PCC 6803 / Kazusa).